The chain runs to 346 residues: MEEIKNITDITQSALAELEAITDLKDLEAWRVRYLGKKSLLTGALRNLASLPIEERKAAGAAANEAKAALEAAFLQKEQISKEKQFASRNEGLDITLPGRPWPIGRIHPLTQVTNEVTTIFSSLGFSVVEGPEIEDDYHNFEALNIPEDHPARENMQTFWIDRPNDNGRLDTLLRTHTSPMQVRYMEKNKPPIRIVVPGKVYRYEATDATHIPMFTQVEGLVVDRGISMAHLKGTLMEFCRRFFGANRKVRFRCDYFPFVEPGVEVAVSCTCGGKKECSVCHGSGWLEILGAGMVHPKVLERVGIDSEQYTGFAFGMGLERLPMLRYGIDDIRLFYSNDTRFLRQF.

Glu-261 contacts Mg(2+).

This sequence belongs to the class-II aminoacyl-tRNA synthetase family. Phe-tRNA synthetase alpha subunit type 1 subfamily. In terms of assembly, tetramer of two alpha and two beta subunits. The cofactor is Mg(2+).

It is found in the cytoplasm. The catalysed reaction is tRNA(Phe) + L-phenylalanine + ATP = L-phenylalanyl-tRNA(Phe) + AMP + diphosphate + H(+). The sequence is that of Phenylalanine--tRNA ligase alpha subunit from Dehalococcoides mccartyi (strain ATCC BAA-2100 / JCM 16839 / KCTC 5957 / BAV1).